A 344-amino-acid polypeptide reads, in one-letter code: Dihydroorotase (344 aa).

Residues H13 and H15 each coordinate Zn(2+). Substrate is bound by residues 15–17 (HLR) and N41. 3 residues coordinate Zn(2+): K98, H135, and H173. Residue K98 is modified to N6-carboxylysine. H135 is a substrate binding site. L218 lines the substrate pocket. D247 provides a ligand contact to Zn(2+). D247 is an active-site residue. Substrate-binding residues include H251 and A263.

It belongs to the metallo-dependent hydrolases superfamily. DHOase family. Class II DHOase subfamily. As to quaternary structure, homodimer. Zn(2+) is required as a cofactor.

The catalysed reaction is (S)-dihydroorotate + H2O = N-carbamoyl-L-aspartate + H(+). Its pathway is pyrimidine metabolism; UMP biosynthesis via de novo pathway; (S)-dihydroorotate from bicarbonate: step 3/3. In terms of biological role, catalyzes the reversible cyclization of carbamoyl aspartate to dihydroorotate. The protein is Dihydroorotase of Neisseria gonorrhoeae (strain ATCC 700825 / FA 1090).